The chain runs to 426 residues: Enolase (426 aa).

Position 163 (Gln163) interacts with (2R)-2-phosphoglycerate. Glu205 (proton donor) is an active-site residue. Positions 242, 286, and 313 each coordinate Mg(2+). (2R)-2-phosphoglycerate contacts are provided by Lys338, Arg367, Ser368, and Lys389. The Proton acceptor role is filled by Lys338.

It belongs to the enolase family. Requires Mg(2+) as cofactor.

The protein resides in the cytoplasm. Its subcellular location is the secreted. It localises to the cell surface. The catalysed reaction is (2R)-2-phosphoglycerate = phosphoenolpyruvate + H2O. The protein operates within carbohydrate degradation; glycolysis; pyruvate from D-glyceraldehyde 3-phosphate: step 4/5. In terms of biological role, catalyzes the reversible conversion of 2-phosphoglycerate (2-PG) into phosphoenolpyruvate (PEP). It is essential for the degradation of carbohydrates via glycolysis. This chain is Enolase, found in Helicobacter pylori (strain Shi470).